The primary structure comprises 270 residues: UPF0162 protein VC_2176 (270 aa).

The protein belongs to the UPF0162 family.

The chain is UPF0162 protein VC_2176 from Vibrio cholerae serotype O1 (strain ATCC 39315 / El Tor Inaba N16961).